The following is a 205-amino-acid chain: Rho-related GTP-binding protein RhoQ (205 aa).

16–23 (GDGAVGKT) is a binding site for GTP. An Effector region motif is present at residues 38–46 (YVPTVFDHY). GTP contacts are provided by residues 63-67 (DTAGQ) and 121-124 (TQID). Residue Cys-202 is modified to Cysteine methyl ester. Residue Cys-202 is the site of S-farnesyl cysteine attachment. A propeptide spans 203–205 (LIT) (removed in mature form).

It belongs to the small GTPase superfamily. Rho family. In terms of assembly, interacts with CDC42EP4 in a GTP-dependent manner. Interacts with ARHGAP33/TCGAP. Interacts with CDC42EP1, CDC42EP2, CDC42EP3, PARD6A, PARD6G (and probably PARD6B) in a GTP-dependent manner. Part of a quaternary complex containing PARD3, some PARD6 protein (PARD6A, PARD6B or PARD6G) and some atypical PKC protein (PRKCI or PRKCZ). Interacts with EXO70 in a GTP-dependent manner. Interacts with GOPC. May be post-translationally modified by both palmitoylation and polyisoprenylation.

Its subcellular location is the cytoplasm. It is found in the cell membrane. With respect to regulation, regulated by guanine nucleotide exchange factors (GEFs) which promote the exchange of bound GDP for free GTP, GTPase activating proteins (GAPs) which increase the GTP hydrolysis activity, and GDP dissociation inhibitors which inhibit the dissociation of the nucleotide from the GTPase. In terms of biological role, plasma membrane-associated small GTPase which cycles between an active GTP-bound and an inactive GDP-bound state. In active state binds to a variety of effector proteins to regulate cellular responses. Involved in epithelial cell polarization processes. May play a role in CFTR trafficking to the plasma membrane. Causes the formation of thin, actin-rich surface projections called filopodia. In Homo sapiens (Human), this protein is Rho-related GTP-binding protein RhoQ (RHOQ).